The primary structure comprises 208 residues: Probable GTP-binding protein EngB (208 aa).

One can recognise an EngB-type G domain in the interval 23–205 (LTSEMVILGR…RQTLLKYLLT (183 aa)). GTP-binding positions include 31–38 (GRSNVGKS), 57–61 (GKTRL), 84–87 (DLPG), 154–157 (TKFD), and 182–184 (FNA). S38 and T59 together coordinate Mg(2+).

This sequence belongs to the TRAFAC class TrmE-Era-EngA-EngB-Septin-like GTPase superfamily. EngB GTPase family. Mg(2+) is required as a cofactor.

Its function is as follows. Necessary for normal cell division and for the maintenance of normal septation. In Helicobacter pylori (strain G27), this protein is Probable GTP-binding protein EngB.